The following is a 499-amino-acid chain: RNA polymerase sigma factor SigA (499 aa).

Basic residues-rich tracts occupy residues 1–12 (MSSPKKNFKKPQ) and 77–87 (KKRRGRKPKHA). 2 disordered regions span residues 1-25 (MSSPKKNFKKPQPKTENQKQALNEE) and 68-89 (QENKESDVPKKRRGRKPKHAPL). The sigma-70 factor domain-2 stretch occupies residues 252 to 322 (LVTSNLRLVV…TRAIADQART (71 aa)). The Interaction with polymerase core subunit RpoC signature appears at 276–279 (DLIQ). Positions 331–412 (ETINRLAKAE…DTDAQMPDEF (82 aa)) are sigma-70 factor domain-3. The segment at 425–480 (LLNNCLSEQEELIVRMRIGMPPYNETKTLDEVSQKIKIPREKIRQIETKAIRKLRQ) is sigma-70 factor domain-4. Positions 453-472 (LDEVSQKIKIPREKIRQIET) form a DNA-binding region, H-T-H motif.

This sequence belongs to the sigma-70 factor family. RpoD/SigA subfamily. In terms of assembly, interacts transiently with the RNA polymerase catalytic core.

It localises to the cytoplasm. Functionally, sigma factors are initiation factors that promote the attachment of RNA polymerase to specific initiation sites and are then released. This sigma factor is the primary sigma factor during exponential growth. The chain is RNA polymerase sigma factor SigA from Mycoplasma pneumoniae (strain ATCC 29342 / M129 / Subtype 1) (Mycoplasmoides pneumoniae).